Reading from the N-terminus, the 219-residue chain is Thiopurine S-methyltransferase (219 aa).

Trp10, Leu45, Glu66, and Arg123 together coordinate S-adenosyl-L-methionine.

It belongs to the class I-like SAM-binding methyltransferase superfamily. TPMT family.

The protein resides in the cytoplasm. It carries out the reaction S-adenosyl-L-methionine + a thiopurine = S-adenosyl-L-homocysteine + a thiopurine S-methylether.. This chain is Thiopurine S-methyltransferase, found in Bordetella pertussis (strain Tohama I / ATCC BAA-589 / NCTC 13251).